The sequence spans 3564 residues: Sushi, von Willebrand factor type A, EGF and pentraxin domain-containing protein 1 (3564 aa).

An N-terminal signal peptide occupies residues Met1–Gly17. Residues Glu84 to Leu265 form the VWFA domain. Residue Asn187 is glycosylated (N-linked (GlcNAc...) asparagine). Sushi domains are found at residues Val377–Val436, Arg437–Glu496, and Arg497–Asp561. 6 disulfides stabilise this stretch: Cys379–Cys421, Cys407–Cys434, Cys439–Cys481, Cys467–Cys494, Cys499–Cys544, and Cys530–Cys559. HYR domains follow at residues Lys560–Asp644 and Val645–Gly724. The region spanning Ser725 to Ile789 is the Sushi 4 domain. 20 disulfide bridges follow: Cys727–Cys769, Cys753–Cys787, Cys1192–Cys1203, Cys1197–Cys1212, Cys1214–Cys1223, Cys1230–Cys1241, Cys1235–Cys1250, Cys1252–Cys1261, Cys1268–Cys1279, Cys1273–Cys1288, Cys1290–Cys1299, Cys1306–Cys1317, Cys1311–Cys1326, Cys1328–Cys1337, Cys1344–Cys1355, Cys1349–Cys1364, Cys1366–Cys1375, Cys1382–Cys1393, Cys1387–Cys1402, and Cys1404–Cys1413. In terms of domain architecture, EGF-like 1 spans Val1188–Glu1224. The EGF-like 2; calcium-binding domain occupies Asp1226–Glu1262. In terms of domain architecture, EGF-like 3; calcium-binding spans Asn1264 to Glu1300. An EGF-like 4; calcium-binding domain is found at Asp1302 to Glu1338. An EGF-like 5; calcium-binding domain is found at Asn1340–Glu1376. Residues Asn1378 to Glu1414 form the EGF-like 6; calcium-binding domain. The Pentraxin (PTX) domain maps to Ser1419–Cys1623. 2 Sushi domains span residues Ser1624–Arg1682 and Ile1683–Asp1740. Cystine bridges form between Cys1626-Cys1667, Cys1653-Cys1680, Cys1685-Cys1725, Cys1711-Cys1738, Cys1744-Cys1756, Cys1750-Cys1765, Cys1767-Cys1778, Cys1784-Cys1824, Cys1810-Cys1837, Cys1842-Cys1882, Cys1868-Cys1895, Cys1900-Cys1940, Cys1926-Cys1953, Cys1958-Cys1998, Cys1984-Cys2011, Cys2016-Cys2056, Cys2042-Cys2073, Cys2078-Cys2121, Cys2107-Cys2136, Cys2141-Cys2181, Cys2167-Cys2194, Cys2199-Cys2240, Cys2226-Cys2254, Cys2259-Cys2299, Cys2285-Cys2313, Cys2318-Cys2358, Cys2344-Cys2371, Cys2376-Cys2417, Cys2403-Cys2430, Cys2435-Cys2475, Cys2461-Cys2488, Cys2493-Cys2533, Cys2519-Cys2546, Cys2551-Cys2591, and Cys2577-Cys2603. The EGF-like 7; calcium-binding domain occupies Asp1740–Ala1779. N-linked (GlcNAc...) asparagine glycosylation occurs at Asn1760. Sushi domains are found at residues Lys1776–Ala1839, Ile1840–Leu1897, Val1898–Leu1955, Val1956–Ala2013, Val2014–Ala2075, His2076–Pro2138, Val2139–Pro2196, Val2197–Pro2256, Leu2257–Pro2315, Thr2316–Leu2373, Val2374–Pro2432, Val2433–Pro2490, Ile2491–Ala2548, and Ile2549–Pro2605. Positions Asp2634 to Leu2641 are important for the interaction with integrin ITGA9:ITGB1. Sushi domains lie at Glu2659–Ser2708, Ile2709–Val2766, Ile2767–Pro2824, Val2825–Pro2882, Val2883–Pro2940, Ala2941–Pro2998, Cys2999–His3054, Ala3055–Pro3112, Val3113–Pro3171, Lys3172–Pro3231, Val3232–Glu3289, Ser3290–Pro3347, Asn3348–Lys3406, and Ile3407–Ala3463. Disulfide bonds link Cys2679/Cys2706, Cys2711/Cys2751, Cys2737/Cys2764, Cys2769/Cys2809, Cys2795/Cys2822, Cys2827/Cys2867, Cys2853/Cys2880, Cys2885/Cys2925, Cys2911/Cys2938, Cys2943/Cys2983, Cys2969/Cys2996, Cys3001/Cys3040, Cys3026/Cys3052, Cys3057/Cys3097, Cys3083/Cys3110, Cys3115/Cys3156, Cys3141/Cys3169, Cys3174/Cys3214, Cys3200/Cys3229, Cys3234/Cys3274, Cys3260/Cys3287, Cys3292/Cys3332, Cys3318/Cys3345, Cys3350/Cys3391, Cys3377/Cys3404, Cys3409/Cys3449, Cys3435/Cys3461, Cys3497/Cys3507, Cys3501/Cys3513, Cys3515/Cys3524, Cys3529/Cys3539, Cys3533/Cys3545, and Cys3547/Cys3556. 2 EGF-like domains span residues Glu3493–His3525 and Thr3526–Ser3557.

As to quaternary structure, interacts (via Sushi domain 21) with ITGA9:ITGB1; thereby inhibits Ca(2+) intracellular signaling and as a result represses vasocontraction. Interacts (via Sushi domain 21) with ITGA4:ITGB1; thereby inhibits Ca(2+) intracellular signaling and as a result represses vasocontraction. Interacts with ANGPT1 and ANGPT2. Interacts with PEAR1 (via extracellular domain). Interacts with HSPG2, TLN1, FN1, COPA, CCT2, IQGAP1, LAMC1 and NID1. Interacts (via C-terminus) with TIE1.

The protein resides in the secreted. It localises to the nucleus. Its subcellular location is the cytoplasm. The protein localises to the membrane. Required for morphological development, cell alignment and migration of lymphatic endothelial cells during embryonic development, potentially via modulation of ANGPT2-TIE1 signaling and subsequent activation of FOXC2 transcription. Required for embryonic lymphatic vascular development, via mediating the correct formation of the first lymphovenous contact site and tight association of the lymphatic endothelium with the venous endothelium. Represses PRKCA-mediated L-type voltage-gated channel Ca(2+) influx and ROCK-mediated calcium sensitivity in vascular smooth muscle cells, via its interaction with integrins, thereby inhibiting vasocontraction. Promotes platelet activation, via its interaction with PEAR1 and subsequent activation of AKT/mTOR signaling. Plays a role in epidermal development and keratinocyte differentiation, independent of cell-cell adhesion. May play a role in initial cell attachment of stromal osteogenic cells. May promote myoblast cell adhesion when in the presence of integrin ITGA9:ITGB1. This Rattus norvegicus (Rat) protein is Sushi, von Willebrand factor type A, EGF and pentraxin domain-containing protein 1 (Svep1).